We begin with the raw amino-acid sequence, 484 residues long: Probable glycine dehydrogenase (decarboxylating) subunit 2 (484 aa).

Residue K264 is modified to N6-(pyridoxal phosphate)lysine.

Belongs to the GcvP family. C-terminal subunit subfamily. The glycine cleavage system is composed of four proteins: P, T, L and H. In this organism, the P 'protein' is a heterodimer of two subunits. The cofactor is pyridoxal 5'-phosphate.

The catalysed reaction is N(6)-[(R)-lipoyl]-L-lysyl-[glycine-cleavage complex H protein] + glycine + H(+) = N(6)-[(R)-S(8)-aminomethyldihydrolipoyl]-L-lysyl-[glycine-cleavage complex H protein] + CO2. The glycine cleavage system catalyzes the degradation of glycine. The P protein binds the alpha-amino group of glycine through its pyridoxal phosphate cofactor; CO(2) is released and the remaining methylamine moiety is then transferred to the lipoamide cofactor of the H protein. This Legionella pneumophila (strain Lens) protein is Probable glycine dehydrogenase (decarboxylating) subunit 2.